We begin with the raw amino-acid sequence, 55 residues long: Large ribosomal subunit protein bL32 (55 aa).

Over residues 1 to 19 (MAVPKRRMSRANTHTRRSQ) the composition is skewed to basic residues. The tract at residues 1–21 (MAVPKRRMSRANTHTRRSQWK) is disordered.

Belongs to the bacterial ribosomal protein bL32 family.

This chain is Large ribosomal subunit protein bL32, found in Corynebacterium kroppenstedtii (strain DSM 44385 / JCM 11950 / CIP 105744 / CCUG 35717).